A 160-amino-acid polypeptide reads, in one-letter code: pH-gated potassium channel KcsA (160 aa).

The Cytoplasmic portion of the chain corresponds to 1 to 27; the sequence is MPPMLSGLLARLVKLLLGRHGSALHWR. Residues 28-50 traverse the membrane as a helical segment; it reads AAGAATVLLVIVLLAGSYLAVLA. The Extracellular portion of the chain corresponds to 51–61; it reads ERGAPGAQLIT. The segment at residues 62–72 is an intramembrane region (helical; Pore-forming); that stretch reads YPRALWWSVET. An intramembrane region (pore-forming) is located at residues 73–80; sequence ATTVGYGD. The short motif at 75-80 is the Selectivity filter element; the sequence is TVGYGD. The Extracellular segment spans residues 81 to 87; that stretch reads LYPVTLW. A helical membrane pass occupies residues 88-111; it reads GRLVAVVVMVAGITSFGLVTAALA. The Cytoplasmic segment spans residues 112–160; sequence TWFVGREQERRGHFVRHSEKAAEEAYTRTTRALHERFDRLERMLDDNRR.

It belongs to the potassium channel family. Homotetramer.

The protein resides in the cell membrane. Functionally, acts as a pH-gated potassium ion channel; changing the cytosolic pH from 7 to 4 opens the channel. The chain is pH-gated potassium channel KcsA (kcsA) from Streptomyces coelicolor (strain ATCC BAA-471 / A3(2) / M145).